The chain runs to 310 residues: Coproporphyrin III ferrochelatase (310 aa).

Fe(2+) contacts are provided by histidine 184 and glutamate 265.

The protein belongs to the ferrochelatase family.

The protein resides in the cytoplasm. It carries out the reaction Fe-coproporphyrin III + 2 H(+) = coproporphyrin III + Fe(2+). The protein operates within porphyrin-containing compound metabolism; protoheme biosynthesis. Its function is as follows. Involved in coproporphyrin-dependent heme b biosynthesis. Catalyzes the insertion of ferrous iron into coproporphyrin III to form Fe-coproporphyrin III. This is Coproporphyrin III ferrochelatase from Limosilactobacillus reuteri (strain DSM 20016) (Lactobacillus reuteri).